The sequence spans 140 residues: Organic hydroperoxide resistance protein-like 1 (140 aa).

This sequence belongs to the OsmC/Ohr family.

In Staphylococcus epidermidis (strain ATCC 35984 / DSM 28319 / BCRC 17069 / CCUG 31568 / BM 3577 / RP62A), this protein is Organic hydroperoxide resistance protein-like 1.